The primary structure comprises 127 residues: Aspartate 1-decarboxylase (127 aa).

S25 functions as the Schiff-base intermediate with substrate; via pyruvic acid in the catalytic mechanism. S25 bears the Pyruvic acid (Ser) mark. Residue T57 coordinates substrate. The Proton donor role is filled by Y58. Position 73–75 (73–75) interacts with substrate; the sequence is GSA.

This sequence belongs to the PanD family. In terms of assembly, heterooctamer of four alpha and four beta subunits. The cofactor is pyruvate. Is synthesized initially as an inactive proenzyme, which is activated by self-cleavage at a specific serine bond to produce a beta-subunit with a hydroxyl group at its C-terminus and an alpha-subunit with a pyruvoyl group at its N-terminus.

It localises to the cytoplasm. The catalysed reaction is L-aspartate + H(+) = beta-alanine + CO2. It participates in cofactor biosynthesis; (R)-pantothenate biosynthesis; beta-alanine from L-aspartate: step 1/1. Its function is as follows. Catalyzes the pyruvoyl-dependent decarboxylation of aspartate to produce beta-alanine. This Laribacter hongkongensis (strain HLHK9) protein is Aspartate 1-decarboxylase.